Reading from the N-terminus, the 445-residue chain is tRNA-2-methylthio-N(6)-dimethylallyladenosine synthase (445 aa).

An MTTase N-terminal domain is found at 2–119; that stretch reads KKLYIRTFGC…LPQLIAERRH (118 aa). Cys-11, Cys-48, Cys-82, Cys-156, Cys-160, and Cys-163 together coordinate [4Fe-4S] cluster. The region spanning 142 to 378 is the Radical SAM core domain; the sequence is RVEGASAFVS…RIDQQAQAIS (237 aa). The region spanning 379 to 442 is the TRAM domain; the sequence is QAMVGRVERA…PHSLRGEIVT (64 aa).

The protein belongs to the methylthiotransferase family. MiaB subfamily. As to quaternary structure, monomer. It depends on [4Fe-4S] cluster as a cofactor.

It is found in the cytoplasm. It catalyses the reaction N(6)-dimethylallyladenosine(37) in tRNA + (sulfur carrier)-SH + AH2 + 2 S-adenosyl-L-methionine = 2-methylsulfanyl-N(6)-dimethylallyladenosine(37) in tRNA + (sulfur carrier)-H + 5'-deoxyadenosine + L-methionine + A + S-adenosyl-L-homocysteine + 2 H(+). Functionally, catalyzes the methylthiolation of N6-(dimethylallyl)adenosine (i(6)A), leading to the formation of 2-methylthio-N6-(dimethylallyl)adenosine (ms(2)i(6)A) at position 37 in tRNAs that read codons beginning with uridine. The polypeptide is tRNA-2-methylthio-N(6)-dimethylallyladenosine synthase (Aromatoleum aromaticum (strain DSM 19018 / LMG 30748 / EbN1) (Azoarcus sp. (strain EbN1))).